Reading from the N-terminus, the 197-residue chain is Protein GrpE (197 aa).

A disordered region spans residues 1–40; that stretch reads MSSKEQKTPEGQAPEEIIMDRHEEIEAVEPEASAEQVDPR.

Belongs to the GrpE family. Homodimer.

It localises to the cytoplasm. Functionally, participates actively in the response to hyperosmotic and heat shock by preventing the aggregation of stress-denatured proteins, in association with DnaK and GrpE. It is the nucleotide exchange factor for DnaK and may function as a thermosensor. Unfolded proteins bind initially to DnaJ; upon interaction with the DnaJ-bound protein, DnaK hydrolyzes its bound ATP, resulting in the formation of a stable complex. GrpE releases ADP from DnaK; ATP binding to DnaK triggers the release of the substrate protein, thus completing the reaction cycle. Several rounds of ATP-dependent interactions between DnaJ, DnaK and GrpE are required for fully efficient folding. In Shigella flexneri serotype 5b (strain 8401), this protein is Protein GrpE.